Reading from the N-terminus, the 408-residue chain is BRCA1-A complex subunit Abraxas 1 (408 aa).

The 149-residue stretch at 7-155 (TAVISGFVFG…KSTHRLEYAL (149 aa)) folds into the MPN domain. Positions 210–272 (ALAEVNRISD…MEEKGNKVSE (63 aa)) form a coiled coil. Residues 335-408 (HRRQAGKRKA…EVSRSKSPTF (74 aa)) form a disordered region. Residues 337–358 (RQAGKRKAHSKQLGKTSTKKSR) are compositionally biased toward basic residues. Residues 394 to 408 (QSLNVEVSRSKSPTF) show a composition bias toward polar residues. The residue at position 405 (Ser-405) is a Phosphoserine. A pSXXF motif motif is present at residues 405 to 408 (SPTF).

This sequence belongs to the FAM175 family. Abraxas subfamily. Component of the BRCA1-A complex. Component of the BRISC complex. Homodimer. Interacts directly (when phosphorylated at Ser-405) with brca1. The phosphorylated homodimer can interact directly with two brca1 chains, giving rise to a heterotetramer. Phosphorylation of Ser-405 of the pSXXF motif by ATM or ATR constitutes a specific recognition motif for the BRCT domain of BRCA1.

Its subcellular location is the nucleus. Involved in DNA damage response and double-strand break (DSB) repair. Component of the BRCA1-A complex, acting as a central scaffold protein that assembles the various components of the complex and mediates the recruitment of brca1. The BRCA1-A complex specifically recognizes 'Lys-63'-linked ubiquitinated histones H2A and H2AX at DNA lesion sites, leading to target the brca1-bard1 heterodimer to sites of DNA damage at DSBs. This complex also possesses deubiquitinase activity that specifically removes 'Lys-63'-linked ubiquitin on histones H2A and H2AX. The polypeptide is BRCA1-A complex subunit Abraxas 1 (Xenopus laevis (African clawed frog)).